The primary structure comprises 504 residues: Ribosomal protein uS12 methylthiotransferase RimO (504 aa).

The MTTase N-terminal domain occupies 21–131 (KRVGFISLGC…VMGHVRELLP (111 aa)). Cys-30, Cys-66, Cys-95, Cys-186, Cys-190, and Cys-193 together coordinate [4Fe-4S] cluster. Residues 172-408 (LTPRHYAYVK…MEVAQRISTE (237 aa)) enclose the Radical SAM core domain. Residues 411–487 (SEKVGRVMDV…EYDLFGEVIE (77 aa)) form the TRAM domain.

Belongs to the methylthiotransferase family. RimO subfamily. It depends on [4Fe-4S] cluster as a cofactor.

It localises to the cytoplasm. The enzyme catalyses L-aspartate(89)-[ribosomal protein uS12]-hydrogen + (sulfur carrier)-SH + AH2 + 2 S-adenosyl-L-methionine = 3-methylsulfanyl-L-aspartate(89)-[ribosomal protein uS12]-hydrogen + (sulfur carrier)-H + 5'-deoxyadenosine + L-methionine + A + S-adenosyl-L-homocysteine + 2 H(+). Functionally, catalyzes the methylthiolation of an aspartic acid residue of ribosomal protein uS12. The polypeptide is Ribosomal protein uS12 methylthiotransferase RimO (Deinococcus radiodurans (strain ATCC 13939 / DSM 20539 / JCM 16871 / CCUG 27074 / LMG 4051 / NBRC 15346 / NCIMB 9279 / VKM B-1422 / R1)).